The chain runs to 124 residues: Small ribosomal subunit protein bS16 (124 aa).

Residues 84–110 (EKAERKNLKKGEPGKAAKERAEKRAAR) are compositionally biased toward basic and acidic residues. Positions 84–124 (EKAERKNLKKGEPGKAAKERAEKRAAREAAANAPAEEAASE) are disordered. The segment covering 111–124 (EAAANAPAEEAASE) has biased composition (low complexity).

The protein belongs to the bacterial ribosomal protein bS16 family.

This Paracoccus denitrificans (strain Pd 1222) protein is Small ribosomal subunit protein bS16.